The primary structure comprises 334 residues: S-adenosylmethionine decarboxylase proenzyme (334 aa).

Substrate is bound at residue Phe7. Residues Glu8 and Glu11 contribute to the active site. Glu67 contributes to the substrate binding site. The Schiff-base intermediate with substrate; via pyruvic acid role is filled by Ser68. A Pyruvic acid (Ser); by autocatalysis modification is found at Ser68. Cys82 acts as the Proton donor; for catalytic activity in catalysis. Phe223 contributes to the substrate binding site. Residues Ser229 and His243 each act as proton acceptor; for processing activity in the active site. Glu247 is a binding site for substrate. Phosphoserine is present on Ser298.

This sequence belongs to the eukaryotic AdoMetDC family. As to quaternary structure, heterotetramer of two alpha and two beta chains. Requires pyruvate as cofactor. Post-translationally, is synthesized initially as an inactive proenzyme. Formation of the active enzyme involves a self-maturation process in which the active site pyruvoyl group is generated from an internal serine residue via an autocatalytic post-translational modification. Two non-identical subunits are generated from the proenzyme in this reaction, and the pyruvate is formed at the N-terminus of the alpha chain, which is derived from the carboxyl end of the proenzyme. The post-translation cleavage follows an unusual pathway, termed non-hydrolytic serinolysis, in which the side chain hydroxyl group of the serine supplies its oxygen atom to form the C-terminus of the beta chain, while the remainder of the serine residue undergoes an oxidative deamination to produce ammonia and the pyruvoyl group blocking the N-terminus of the alpha chain.

The catalysed reaction is S-adenosyl-L-methionine + H(+) = S-adenosyl 3-(methylsulfanyl)propylamine + CO2. Its pathway is amine and polyamine biosynthesis; S-adenosylmethioninamine biosynthesis; S-adenosylmethioninamine from S-adenosyl-L-methionine: step 1/1. Essential for biosynthesis of the polyamines spermidine and spermine. Promotes maintenance and self-renewal of embryonic stem cells, by maintaining spermine levels. In Mesocricetus auratus (Golden hamster), this protein is S-adenosylmethionine decarboxylase proenzyme (AMD1).